The primary structure comprises 499 residues: GTPase Der (499 aa).

EngA-type G domains follow at residues 3–166 (PVVA…MDEV) and 211–384 (IKLA…DCST). GTP contacts are provided by residues 9 to 16 (GRPNVGKS), 56 to 60 (DTGGI), 118 to 121 (NKTD), 217 to 224 (GRPNVGKS), 264 to 268 (DTAGV), and 329 to 332 (NKWD). In terms of domain architecture, KH-like spans 385 to 469 (RRVNTSMLTR…PIRIQFKEGD (85 aa)).

The protein belongs to the TRAFAC class TrmE-Era-EngA-EngB-Septin-like GTPase superfamily. EngA (Der) GTPase family. As to quaternary structure, associates with the 50S ribosomal subunit.

Functionally, GTPase that plays an essential role in the late steps of ribosome biogenesis. The sequence is that of GTPase Der from Erwinia tasmaniensis (strain DSM 17950 / CFBP 7177 / CIP 109463 / NCPPB 4357 / Et1/99).